Reading from the N-terminus, the 208-residue chain is Uracil phosphoribosyltransferase (208 aa).

Residues Arg78, Arg103, and 130–138 each bind 5-phospho-alpha-D-ribose 1-diphosphate; that span reads DPMLATGVS. Residues Ile193 and 198–200 contribute to the uracil site; that span reads GDA. Residue Asp199 coordinates 5-phospho-alpha-D-ribose 1-diphosphate.

The protein belongs to the UPRTase family. Mg(2+) is required as a cofactor.

The enzyme catalyses UMP + diphosphate = 5-phospho-alpha-D-ribose 1-diphosphate + uracil. Its pathway is pyrimidine metabolism; UMP biosynthesis via salvage pathway; UMP from uracil: step 1/1. Allosterically activated by GTP. In terms of biological role, catalyzes the conversion of uracil and 5-phospho-alpha-D-ribose 1-diphosphate (PRPP) to UMP and diphosphate. This chain is Uracil phosphoribosyltransferase, found in Thermosipho africanus (strain TCF52B).